A 903-amino-acid polypeptide reads, in one-letter code: HTH-type transcriptional regulator MalT (903 aa).

39–46 (CPAGYGKT) contacts ATP. The HTH luxR-type domain maps to 832–897 (ELIRTSPLTQ…DAVQQAQRLL (66 aa)). The segment at residues 856-875 (NDQIAGELEVAATTIKTHIR) is a DNA-binding region (H-T-H motif).

Belongs to the MalT family. In terms of assembly, monomer in solution. Oligomerizes to an active state in the presence of the positive effectors ATP and maltotriose.

Its activity is regulated as follows. Activated by ATP and maltotriose, which are both required for DNA binding. Positively regulates the transcription of the maltose regulon whose gene products are responsible for uptake and catabolism of malto-oligosaccharides. Specifically binds to the promoter region of its target genes, recognizing a short DNA motif called the MalT box. The protein is HTH-type transcriptional regulator MalT of Yersinia enterocolitica serotype O:8 / biotype 1B (strain NCTC 13174 / 8081).